A 558-amino-acid polypeptide reads, in one-letter code: uncharacterized protein (558 aa).

The segment at 531 to 558 is disordered; sequence NEDDGTSASPTAMTFDMPPEHPFYSHYR.

This is an uncharacterized protein from Saccharomyces cerevisiae (strain ATCC 204508 / S288c) (Baker's yeast).